A 41-amino-acid polypeptide reads, in one-letter code: Large ribosomal subunit protein bL36A (41 aa).

The protein belongs to the bacterial ribosomal protein bL36 family.

This is Large ribosomal subunit protein bL36A from Vibrio cholerae serotype O1 (strain ATCC 39541 / Classical Ogawa 395 / O395).